The following is a 275-amino-acid chain: Formamidopyrimidine-DNA glycosylase (275 aa).

The Schiff-base intermediate with DNA role is filled by Pro-2. Glu-3 serves as the catalytic Proton donor. The active-site Proton donor; for beta-elimination activity is Lys-59. Positions 94 and 113 each coordinate DNA. An FPG-type zinc finger spans residues 241 to 275 (LVHTHAKEPCQICGTIIQKTKVNGRGTYYCPNCQN). The active-site Proton donor; for delta-elimination activity is the Arg-265.

Belongs to the FPG family. As to quaternary structure, monomer. Zn(2+) is required as a cofactor.

The catalysed reaction is Hydrolysis of DNA containing ring-opened 7-methylguanine residues, releasing 2,6-diamino-4-hydroxy-5-(N-methyl)formamidopyrimidine.. It catalyses the reaction 2'-deoxyribonucleotide-(2'-deoxyribose 5'-phosphate)-2'-deoxyribonucleotide-DNA = a 3'-end 2'-deoxyribonucleotide-(2,3-dehydro-2,3-deoxyribose 5'-phosphate)-DNA + a 5'-end 5'-phospho-2'-deoxyribonucleoside-DNA + H(+). In terms of biological role, involved in base excision repair of DNA damaged by oxidation or by mutagenic agents. Acts as a DNA glycosylase that recognizes and removes damaged bases. Has a preference for oxidized purines, such as 7,8-dihydro-8-oxoguanine (8-oxoG). Has AP (apurinic/apyrimidinic) lyase activity and introduces nicks in the DNA strand. Cleaves the DNA backbone by beta-delta elimination to generate a single-strand break at the site of the removed base with both 3'- and 5'-phosphates. This chain is Formamidopyrimidine-DNA glycosylase, found in Ureaplasma parvum serovar 3 (strain ATCC 700970).